Reading from the N-terminus, the 776-residue chain is MVALRRAVALNAVAIARLQTRALTARTRSLALASSQYRAYKTSSRQHAFHSQLENTPTPSAFQYQKPPTVENPQTLVEKIAQQYAVGLAPGKKIKAGDYIALAPHHCMSHDNTWPIAKKFLDIGASKIHNNRQVVFTLDHDVQNKSEANLKKYSLIHEFAEKHGVIHYPAGRGIGHQIMVEEGYAWPGTVSVASDSHSNMYGGIGCLGTAVVRTDAASIWATGQTWWQVPPVAKVTFTGILPPGVTGKDVIIALCGLFRDDQVLNHAVEFAGGESLPIDDRLTISNMTTEWGALAGVFPVDEMLISWYRGKATTNAMFGGSSKDRINHKRVDELEQNRLEADPNAKYAKELYLNLSTLSPIVAGPNSVKIATPLKNLEAEDIPVNKAYLVSCTNSRASDIAAAARVFREAAKENKDVKIAPGVNFYIAAASLPEQEIAEEAGDWQVLRDAGAQVLPAGCGPCIGLGTGLLEPGEVGISASNRNFKGRMGSTSAKAYLASPEIVAASALKGKIAGPGWYQKPEGVEKVIIGEGSGDYVADKALSIEDALDKLINEADALIAAAETSEGAKEQAASPTAAEGEESLTEILPGFPEKVEGEIVFCDSDNINTDGIYPGKYTYQDNVSVEKMAEVCMENYDTEFGKFAKAGDILVTGFNFGCGSSREQAATALLAKKIPLVVSGSFGNIFSRNSINNALMGVEVPRLVERLRETYKNDTEKPLTRRTGWKLVWDVRRSKVIVTEKDGSSWEQKVGELPANVQEIIARGGLEKWVKAKIDA.

A mitochondrion-targeting transit peptide spans 1-24; that stretch reads MVALRRAVALNAVAIARLQTRALT. [4Fe-4S] cluster contacts are provided by cysteine 392, cysteine 459, and cysteine 462.

Belongs to the aconitase/IPM isomerase family. It depends on [4Fe-4S] cluster as a cofactor.

The protein resides in the mitochondrion. It carries out the reaction (2R,3S)-homoisocitrate = cis-homoaconitate + H2O. The protein operates within amino-acid biosynthesis; L-lysine biosynthesis via AAA pathway; L-alpha-aminoadipate from 2-oxoglutarate: step 3/5. Catalyzes the reversible hydration of cis-homoaconitate to (2R,3S)-homoisocitrate, a step in the alpha-aminoadipate pathway for lysine biosynthesis. This chain is Homoaconitase, mitochondrial (LYS4), found in Gibberella zeae (strain ATCC MYA-4620 / CBS 123657 / FGSC 9075 / NRRL 31084 / PH-1) (Wheat head blight fungus).